A 120-amino-acid chain; its full sequence is Putative 15 kDa capsid protein (120 aa).

The protein localises to the virion. In Orgyia pseudotsugata (Douglas-fir tussock moth), this protein is Putative 15 kDa capsid protein (P15).